The primary structure comprises 68 residues: MAVPQNKITKSRRGQRRSHDALVAGNPNECPNCGELKRPHHVCAACGHYADREVIAQADEIDLDEDAA.

A disordered region spans residues 1–25; the sequence is MAVPQNKITKSRRGQRRSHDALVAG.

It belongs to the bacterial ribosomal protein bL32 family.

In Dinoroseobacter shibae (strain DSM 16493 / NCIMB 14021 / DFL 12), this protein is Large ribosomal subunit protein bL32.